The following is a 576-amino-acid chain: G protein-coupled receptor kinase 6 (576 aa).

Residues 1 to 185 (MELENIVANT…LERQPVTKNT (185 aa)) are N-terminal. Positions 53–171 (YHSLCERQPI…LDSIYFNRFL (119 aa)) constitute an RGS domain. The 263-residue stretch at 186–448 (FRQYRVLGKG…AREVKEHPLF (263 aa)) folds into the Protein kinase domain. ATP contacts are provided by residues 192–200 (LGKGGFGEV), Lys-215, and 264–270 (TLMNGGD). Residue Asp-311 is the Proton acceptor of the active site. 315–318 (ENIL) lines the ATP pocket. The AGC-kinase C-terminal domain maps to 449–514 (KKLNFKRLGA…GSVSIPWQNE (66 aa)). Position 484 is a phosphoserine; by autocatalysis (Ser-484). At Thr-485 the chain carries Phosphothreonine; by autocatalysis. S-palmitoyl cysteine attachment occurs at residues Cys-561, Cys-562, and Cys-565. Ser-566 and Ser-568 each carry phosphoserine.

Belongs to the protein kinase superfamily. AGC Ser/Thr protein kinase family. GPRK subfamily. In terms of assembly, interacts with GIT1. In terms of tissue distribution, widely expressed. Detectable in all brain areas examined.

The protein localises to the membrane. The enzyme catalyses [G-protein-coupled receptor] + ATP = [G-protein-coupled receptor]-phosphate + ADP + H(+). Specifically phosphorylates the activated forms of G protein-coupled receptors. Such receptor phosphorylation initiates beta-arrestin-mediated receptor desensitization, internalization, and signaling events leading to their desensitization. Seems to be involved in the desensitization of D2-like dopamine receptors in striatum and chemokine receptor CXCR4 which is critical for CXCL12-induced cell chemotaxis. Phosphorylates rhodopsin (RHO) (in vitro) and a non G-protein-coupled receptor: LRP6 during Wnt signaling (in vitro). In Rattus norvegicus (Rat), this protein is G protein-coupled receptor kinase 6 (Grk6).